A 285-amino-acid polypeptide reads, in one-letter code: MITIACAEGGSTIYSLKKAIEDLGEKCNILLLSSDNLLVDTDFNIKTDLIHSRCGIGDYLDRLTLFSWQVLKNLESEGHYFINPLETIYNSSDKFKTTKILSKNGLKTPKTALIRDYADAKHFLDTKNMNYPVILKNSFSKCGMKVQKANSDDELKKLSKNSIWESKLIQEYVDFKNGDTYKDMRILVIDGEVVGGYRRVSNNFITNLYVGGQIEPLNVSSELEEIALKCSECMNGYIMGIDILPKDGEYYVVEVNTAPGTKGFRSLGIDVDKRIAECLIKYKKS.

Residues 98–284 (TKILSKNGLK…IAECLIKYKK (187 aa)) enclose the ATP-grasp domain. ATP-binding positions include lysine 136, 170–183 (QEYVDFKNGDTYKD), and arginine 199. Mn(2+)-binding residues include aspartate 242, glutamate 254, and asparagine 256.

Belongs to the RimK family. CofF subfamily. In terms of assembly, monomer. The cofactor is Mn(2+).

The enzyme catalyses oxidized coenzyme F420-2 + L-glutamate + ATP = oxidized coenzyme alpha-F420-3 + ADP + phosphate + H(+). Its pathway is cofactor biosynthesis; coenzyme F420 biosynthesis. Catalyzes the ATP-dependent addition of one alpha-linked L-glutamate molecule to coenzyme gamma-F420-2, producing coenzyme alpha-F420-3. Thus, caps the gamma-polyglutamate tail of coenzyme F420 with a terminal alpha-linked glutamate. This is Coenzyme gamma-F420-2:alpha-L-glutamate ligase (cofF) from Methanococcus maripaludis (strain DSM 14266 / JCM 13030 / NBRC 101832 / S2 / LL).